Here is a 202-residue protein sequence, read N- to C-terminus: Outer-membrane lipoprotein carrier protein (202 aa).

Residues 1–20 form the signal peptide; sequence MKKQLLIGSVLLVASSQVWA.

The protein belongs to the LolA family. Monomer.

The protein localises to the periplasm. Its function is as follows. Participates in the translocation of lipoproteins from the inner membrane to the outer membrane. Only forms a complex with a lipoprotein if the residue after the N-terminal Cys is not an aspartate (The Asp acts as a targeting signal to indicate that the lipoprotein should stay in the inner membrane). The chain is Outer-membrane lipoprotein carrier protein from Aeromonas salmonicida (strain A449).